We begin with the raw amino-acid sequence, 456 residues long: Transforming growth factor beta-1-induced transcript 1 protein (456 aa).

Methionine 1 bears the N-acetylmethionine mark. The tract at residues 1 to 79 (MEDLDALLSD…ATPPFSSSCG (79 aa)) is disordered. A transcription activation region spans residues 1–195 (MEDLDALLSD…DTPSPPGPTS (195 aa)). Residues 1–235 (MEDLDALLSD…CNKPIAGQVV (235 aa)) are interaction with PTK2B/PYK2. The short motif at 3–15 (DLDALLSDLETTT) is the LD motif 1 element. A Phosphothreonine modification is found at threonine 33. Tyrosine 55 is subject to Phosphotyrosine. Serine 63 bears the Phosphoserine mark. The interaction with PTK2/FAK1 stretch occupies residues 78 to 131 (CGVLGTGLCELDRLLQELNATQFNITDEIMSQFPSSKETAGEQKEDQSEDKKRP). The LD motif 2 signature appears at 87 to 99 (ELDRLLQELNATQ). The tract at residues 109–146 (QFPSSKETAGEQKEDQSEDKKRPSPPPSPSPVLPKPSA) is disordered. Residues 116 to 130 (TAGEQKEDQSEDKKR) are compositionally biased toward basic and acidic residues. Serine 132, serine 136, serine 138, serine 159, serine 181, and serine 189 each carry phosphoserine. Positions 132–142 (SPPPSPSPVLP) are enriched in pro residues. Positions 152 to 163 (ELDRLMASLSDF) match the LD motif 3 motif. Residues 166–200 (QNHLPASGPTPPPVPSSMSEDTPSPPGPTSKGSLD) are disordered. The LD motif 4 signature appears at 198–210 (SLDTMLGLLQSDL). LIM zinc-binding domains follow at residues 221 to 280 (GLCG…RFSP), 281 to 338 (RCGL…QLFA), 339 to 398 (PRCQ…RRGS), and 399 to 456 (LCAT…KLFG). Serine 398 carries the post-translational modification Phosphoserine. Threonine 402 is modified (phosphothreonine).

Belongs to the paxillin family. In terms of assembly, homooligomer. Interacts with CRIP2, HSPB1, ILK, LIMS1, LIMS2, NCK2, NUDT16L1, PAK, PPARG, PTPN12, TCF3, TCF7L2 and VCL. Forms a complex with GIT1 and ARHGEF7. Interacts with AR/androgen receptor in a ligand-dependent manner. Interacts with CSK, LYN, MAPK15, NR3C1, PPARG, PTK2/FAK1, PTK2B/PYK2, SLC6A3, SLC6A4, SMAD3, SRC and talin. Interacts (via LIM zinc-binding domain 2) with CBLC (via RING-type zinc finger); the interaction is direct and enhances CBLC E3 ubiquitin-protein ligase activity. Phosphorylated by gonadotropin-releasing hormone-activated SRC.

It is found in the cell junction. It localises to the focal adhesion. The protein localises to the nucleus matrix. Its subcellular location is the cytoplasm. The protein resides in the cytoskeleton. Functionally, functions as a molecular adapter coordinating multiple protein-protein interactions at the focal adhesion complex and in the nucleus. Links various intracellular signaling modules to plasma membrane receptors and regulates the Wnt and TGFB signaling pathways. May also regulate SLC6A3 and SLC6A4 targeting to the plasma membrane hence regulating their activity. In the nucleus, functions as a nuclear receptor coactivator regulating glucocorticoid, androgen, mineralocorticoid and progesterone receptor transcriptional activity. May play a role in the processes of cell growth, proliferation, migration, differentiation and senescence. May have a zinc-dependent DNA-binding activity. This Bos taurus (Bovine) protein is Transforming growth factor beta-1-induced transcript 1 protein (TGFB1I1).